Reading from the N-terminus, the 131-residue chain is Small ribosomal subunit protein uS12 (131 aa).

A disordered region spans residues 1–22 (MPTTQQLLRKGRKVLQKKSKVP). Positions 9 to 20 (RKGRKVLQKKSK) are enriched in basic residues. Asp-89 bears the 3-methylthioaspartic acid mark. Positions 102–131 (LDTQGVKDRNKSRSKYGTKKPKAGAAAAKK) are disordered. Basic residues predominate over residues 113-131 (SRSKYGTKKPKAGAAAAKK).

It belongs to the universal ribosomal protein uS12 family. As to quaternary structure, part of the 30S ribosomal subunit. Contacts proteins S8 and S17. May interact with IF1 in the 30S initiation complex.

Its function is as follows. With S4 and S5 plays an important role in translational accuracy. Functionally, interacts with and stabilizes bases of the 16S rRNA that are involved in tRNA selection in the A site and with the mRNA backbone. Located at the interface of the 30S and 50S subunits, it traverses the body of the 30S subunit contacting proteins on the other side and probably holding the rRNA structure together. The combined cluster of proteins S8, S12 and S17 appears to hold together the shoulder and platform of the 30S subunit. This Deinococcus radiodurans (strain ATCC 13939 / DSM 20539 / JCM 16871 / CCUG 27074 / LMG 4051 / NBRC 15346 / NCIMB 9279 / VKM B-1422 / R1) protein is Small ribosomal subunit protein uS12.